Here is a 376-residue protein sequence, read N- to C-terminus: Protein FhaE (376 aa).

A signal peptide spans 1–37; sequence MSQIFADRRAAVPARVISFCGAALAVWAGLAVQPAMA.

In Bordetella pertussis (strain Tohama I / ATCC BAA-589 / NCTC 13251), this protein is Protein FhaE (fhaE).